A 369-amino-acid chain; its full sequence is Putative protein FAM10A5 (369 aa).

The tract at residues 38-98 is disordered; the sequence is MGGKVPPATQ…IEPDTDAPQE (61 aa). Over residues 49–73 the composition is skewed to basic and acidic residues; it reads AKSEENTKEEKPDSKKVEEDLKADE. Residues 89 to 98 show a composition bias toward acidic residues; it reads IEPDTDAPQE. 3 TPR repeats span residues 114-147, 149-181, and 183-215; these read ANDK…NPRL, ILYA…NPDS, and QPYK…DYDE. Basic and acidic residues predominate over residues 256-272; that stretch reads KAQEEQERAQREEEARR. Positions 256 to 300 are disordered; the sequence is KAQEEQERAQREEEARRQSGAHYGPFPGGFPGGMPGNFPGGMPGM. Positions 281 to 300 are enriched in gly residues; it reads FPGGFPGGMPGNFPGGMPGM. In terms of domain architecture, STI1 spans 319 to 358; that stretch reads DPEALAAMQDPEVMVAFQDVAQNPANMSKYQSNPKVMNLI. S346 carries the post-translational modification Phosphoserine. An N6-acetyllysine mark is found at K353 and K360.

This sequence belongs to the FAM10 family.

The protein localises to the cytoplasm. This is Putative protein FAM10A5 (ST13P5) from Homo sapiens (Human).